The sequence spans 767 residues: Protein transport protein Sec23B (767 aa).

At alanine 2 the chain carries N-acetylalanine. 4 residues coordinate Zn(2+): cysteine 61, cysteine 66, cysteine 85, and cysteine 88. Lysine 564 bears the N6-acetyllysine mark. A Gelsolin-like repeat occupies 634 to 720 (PEPVLLDSSS…EHGGSQARFL (87 aa)).

Belongs to the SEC23/SEC24 family. SEC23 subfamily. COPII is composed of at least five proteins: the Sec23/24 complex, the Sec13/31 complex and Sar1. Interacts with SAR1A.

It is found in the cytoplasmic vesicle. The protein resides in the COPII-coated vesicle membrane. Its subcellular location is the endoplasmic reticulum membrane. The protein localises to the cytoplasm. It localises to the cytosol. In terms of biological role, component of the coat protein complex II (COPII) which promotes the formation of transport vesicles from the endoplasmic reticulum (ER). The coat has two main functions, the physical deformation of the endoplasmic reticulum membrane into vesicles and the selection of cargo molecules for their transport to the Golgi complex. This Mus musculus (Mouse) protein is Protein transport protein Sec23B.